A 589-amino-acid polypeptide reads, in one-letter code: Aspartate--tRNA(Asp/Asn) ligase (589 aa).

Residue glutamate 175 participates in L-aspartate binding. The segment at 199–202 (QQLK) is aspartate. Residue arginine 221 coordinates L-aspartate. ATP-binding positions include 221–223 (RDE) and glutamine 230. Histidine 451 serves as a coordination point for L-aspartate. Residue glutamate 485 coordinates ATP. An L-aspartate-binding site is contributed by arginine 492. 537 to 540 (GIDR) is a binding site for ATP.

It belongs to the class-II aminoacyl-tRNA synthetase family. Type 1 subfamily. Homodimer.

The protein resides in the cytoplasm. It carries out the reaction tRNA(Asx) + L-aspartate + ATP = L-aspartyl-tRNA(Asx) + AMP + diphosphate. Its function is as follows. Aspartyl-tRNA synthetase with relaxed tRNA specificity since it is able to aspartylate not only its cognate tRNA(Asp) but also tRNA(Asn). Reaction proceeds in two steps: L-aspartate is first activated by ATP to form Asp-AMP and then transferred to the acceptor end of tRNA(Asp/Asn). In Roseiflexus sp. (strain RS-1), this protein is Aspartate--tRNA(Asp/Asn) ligase.